The following is a 341-amino-acid chain: Glyceraldehyde-3-phosphate dehydrogenase 2 (341 aa).

NAD(+) is bound by residues 12 to 13, R78, and T120; that span reads RI. Residues 152–154 and T183 contribute to the D-glyceraldehyde 3-phosphate site; that span reads SCT. Residue C153 is the Nucleophile of the active site. NAD(+) is bound at residue N184. D-glyceraldehyde 3-phosphate-binding positions include R198, 211 to 212, and R234; that span reads TG. N313 is an NAD(+) binding site.

It belongs to the glyceraldehyde-3-phosphate dehydrogenase family. Homotetramer.

It localises to the cytoplasm. The catalysed reaction is D-glyceraldehyde 3-phosphate + phosphate + NAD(+) = (2R)-3-phospho-glyceroyl phosphate + NADH + H(+). Its pathway is carbohydrate degradation; glycolysis; pyruvate from D-glyceraldehyde 3-phosphate: step 1/5. Functionally, catalyzes the oxidative phosphorylation of glyceraldehyde 3-phosphate (G3P) to 1,3-bisphosphoglycerate (BPG) using the cofactor NAD. The first reaction step involves the formation of a hemiacetal intermediate between G3P and a cysteine residue, and this hemiacetal intermediate is then oxidized to a thioester, with concomitant reduction of NAD to NADH. The reduced NADH is then exchanged with the second NAD, and the thioester is attacked by a nucleophilic inorganic phosphate to produce BPG. This Staphylococcus epidermidis (strain ATCC 35984 / DSM 28319 / BCRC 17069 / CCUG 31568 / BM 3577 / RP62A) protein is Glyceraldehyde-3-phosphate dehydrogenase 2 (gapA2).